The following is a 516-amino-acid chain: 3-phosphoshikimate 1-carboxyvinyltransferase, chloroplastic (516 aa).

Residues 1 to 72 (MAQINNMAQG…RISASVATAQ (72 aa)) constitute a chloroplast transit peptide. 3-phosphoshikimate is bound by residues Lys-95, Ser-96, and Arg-100. Position 95 (Lys-95) interacts with phosphoenolpyruvate. The phosphoenolpyruvate site is built by Gly-173 and Arg-203. Positions 250, 251, 252, 278, 403, and 430 each coordinate 3-phosphoshikimate. Phosphoenolpyruvate is bound at residue Gln-252. Asp-403 functions as the Proton acceptor in the catalytic mechanism. Residues Arg-434, Arg-476, and Lys-501 each coordinate phosphoenolpyruvate.

This sequence belongs to the EPSP synthase family. In terms of tissue distribution, mostly expressed in flower petals, and, to a lower extent, in roots, stems and anthers, but barely in leaves.

It is found in the plastid. The protein localises to the chloroplast. It catalyses the reaction 3-phosphoshikimate + phosphoenolpyruvate = 5-O-(1-carboxyvinyl)-3-phosphoshikimate + phosphate. It participates in metabolic intermediate biosynthesis; chorismate biosynthesis; chorismate from D-erythrose 4-phosphate and phosphoenolpyruvate: step 6/7. With respect to regulation, competitively inhibited by glyphosate. Catalyzes the transfer of the enolpyruvyl moiety of phosphoenolpyruvate (PEP) to the 5-hydroxyl of shikimate-3-phosphate (S3P) to produce enolpyruvyl shikimate-3-phosphate and inorganic phosphate. Involved in the accumulation of volatile benzoides in flowers, scent attracting pollinators (e.g. the night-active hawkmoth pollinator Manduca sexta). This Petunia hybrida (Petunia) protein is 3-phosphoshikimate 1-carboxyvinyltransferase, chloroplastic.